A 286-amino-acid chain; its full sequence is uncharacterized protein (286 aa).

Disordered regions lie at residues 59-89 (PESAPGKPGCAEAESAGTAAATESHGAPGAK) and 225-286 (RQRK…EDTR). Over residues 69 to 85 (AEAESAGTAAATESHGA) the composition is skewed to low complexity.

This is an uncharacterized protein from Mus musculus (Mouse).